We begin with the raw amino-acid sequence, 271 residues long: MKRYVFMLSDGTGITAETLGNSLITQFENIQFEKITIPYIDSTHRAESVVLRINQCFSEQGTKPLVFMTLVDPEIRQAIKKAHACVFDLFSIFIGPLENELEEKSSYTVGRTHGVANVKSYSHRIEAIDFALSHDDGIKTRGYDKADIILIGVSRCGKTPSCLYMALQYGILAANYPFTEEDLVGFRLPEVLRPYKQKLFGLTIDAQRLQQIRSERRPNSKYASAEQCRLEVTEVEAMYQRENIPYINSTKYSIEEISTKVLAIAGLQRKI.

152 to 159 is a binding site for ADP; it reads GVSRCGKT.

Belongs to the pyruvate, phosphate/water dikinase regulatory protein family. PSRP subfamily.

The catalysed reaction is [pyruvate, water dikinase] + ADP = [pyruvate, water dikinase]-phosphate + AMP + H(+). The enzyme catalyses [pyruvate, water dikinase]-phosphate + phosphate + H(+) = [pyruvate, water dikinase] + diphosphate. Functionally, bifunctional serine/threonine kinase and phosphorylase involved in the regulation of the phosphoenolpyruvate synthase (PEPS) by catalyzing its phosphorylation/dephosphorylation. The polypeptide is Putative phosphoenolpyruvate synthase regulatory protein (Legionella pneumophila (strain Corby)).